Reading from the N-terminus, the 157-residue chain is Nucleoside diphosphate kinase (157 aa).

5 residues coordinate ATP: lysine 12, phenylalanine 60, arginine 88, threonine 94, and arginine 105. Catalysis depends on histidine 121, which acts as the Pros-phosphohistidine intermediate.

The protein belongs to the NDK family. Mg(2+) serves as cofactor.

Its subcellular location is the cytoplasm. It carries out the reaction a 2'-deoxyribonucleoside 5'-diphosphate + ATP = a 2'-deoxyribonucleoside 5'-triphosphate + ADP. It catalyses the reaction a ribonucleoside 5'-diphosphate + ATP = a ribonucleoside 5'-triphosphate + ADP. Functionally, major role in the synthesis of nucleoside triphosphates other than ATP. The ATP gamma phosphate is transferred to the NDP beta phosphate via a ping-pong mechanism, using a phosphorylated active-site intermediate. This is Nucleoside diphosphate kinase from Pyrococcus horikoshii (strain ATCC 700860 / DSM 12428 / JCM 9974 / NBRC 100139 / OT-3).